Reading from the N-terminus, the 1005-residue chain is DNA double-strand break repair Rad50 ATPase (1005 aa).

Residues lysine 14, 35–40 (GSGKSS), 62–64 (ITK), and glutamine 134 each bind ATP. Coiled coils occupy residues 189–230 (KENY…IEKL), 292–321 (LVDEIRKIESRLRELKSHYEDYLKLTKQLE), 346–379 (LDTLLNKIKDEIERVETIKDLLEELKNLNEEIEK), and 404–498 (AVEY…LKEV). The 98-residue stretch at 457 to 554 (IEEKKKVLEN…DIEKLKKEID (98 aa)) folds into the Zinc-hook domain. The Zn(2+) site is built by cysteine 502 and cysteine 505. Coiled-coil stretches lie at residues 523 to 600 (TQLN…YVIN), 656 to 692 (KEKCREELNKLREDEREINRLKDKLNELKNKEKELIE), and 800 to 834 (RQELDNVREQKTEIETGIEYLKKDVESLKARLKEM).

It belongs to the SMC family. RAD50 subfamily. In terms of assembly, homodimer. Forms a heterotetramer composed of two Mre11 subunits and two Rad50 subunits. Zn(2+) serves as cofactor.

Part of the Rad50/Mre11 complex, which is involved in the early steps of DNA double-strand break (DSB) repair. The complex may facilitate opening of the processed DNA ends to aid in the recruitment of HerA and NurA. Rad50 controls the balance between DNA end bridging and DNA resection via ATP-dependent structural rearrangements of the Rad50/Mre11 complex. The sequence is that of DNA double-strand break repair Rad50 ATPase from Methanocaldococcus jannaschii (strain ATCC 43067 / DSM 2661 / JAL-1 / JCM 10045 / NBRC 100440) (Methanococcus jannaschii).